A 271-amino-acid polypeptide reads, in one-letter code: Mediator of RNA polymerase II transcription subunit 18 (271 aa).

Residues 89–119 (FGGNPSSSGDPDVSMSGLEEKPSSSSSSYSY) are disordered.

Belongs to the Mediator complex subunit 18 family. In terms of assembly, component of the Mediator complex.

It localises to the nucleus. Its function is as follows. Component of the Mediator complex, a coactivator involved in the regulated transcription of nearly all RNA polymerase II-dependent genes. Mediator functions as a bridge to convey information from gene-specific regulatory proteins to the basal RNA polymerase II transcription machinery. Mediator is recruited to promoters by direct interactions with regulatory proteins and serves as a scaffold for the assembly of a functional preinitiation complex with RNA polymerase II and the general transcription factors. In Aspergillus niger (strain ATCC MYA-4892 / CBS 513.88 / FGSC A1513), this protein is Mediator of RNA polymerase II transcription subunit 18 (srb5).